A 180-amino-acid polypeptide reads, in one-letter code: ATP-dependent protease subunit HslV (180 aa).

Residue Thr6 is part of the active site. Na(+) contacts are provided by Gly162, Cys165, and Thr168.

It belongs to the peptidase T1B family. HslV subfamily. As to quaternary structure, a double ring-shaped homohexamer of HslV is capped on each side by a ring-shaped HslU homohexamer. The assembly of the HslU/HslV complex is dependent on binding of ATP.

Its subcellular location is the cytoplasm. The enzyme catalyses ATP-dependent cleavage of peptide bonds with broad specificity.. With respect to regulation, allosterically activated by HslU binding. Its function is as follows. Protease subunit of a proteasome-like degradation complex believed to be a general protein degrading machinery. This Oleidesulfovibrio alaskensis (strain ATCC BAA-1058 / DSM 17464 / G20) (Desulfovibrio alaskensis) protein is ATP-dependent protease subunit HslV.